Reading from the N-terminus, the 299-residue chain is Mitochondrial 2-oxodicarboxylate carrier (299 aa).

Solcar repeat units lie at residues 11-100 (REAS…YKKL), 107-196 (SPAL…VKNM), and 205-294 (LEFW…TYSW). 6 helical membrane passes run 17-37 (IVAGGSAGLVEICLMHPLDVV), 70-89 (FGFYKGILPPILAETPKRAV), 113-133 (AIAGLGSGLTEAIVVNPFEVV), 167-187 (GLNKGLTATLGRHGVFNMVYF), 205-225 (LEFWRKFGIGLLSGTIASVIN), and 277-297 (LGPGGAVMLLVYEYTYSWLQE).

The protein belongs to the mitochondrial carrier (TC 2.A.29) family. As to expression, expressed in placenta, gall bladder and colon.

Its subcellular location is the mitochondrion inner membrane. The enzyme catalyses 2-oxoadipate(in) + 2-oxoglutarate(out) = 2-oxoadipate(out) + 2-oxoglutarate(in). It carries out the reaction hexanedioate(in) + 2-oxoglutarate(out) = hexanedioate(out) + 2-oxoglutarate(in). It catalyses the reaction L-2-aminoadipate(in) + 2-oxoglutarate(out) = L-2-aminoadipate(out) + 2-oxoglutarate(in). The catalysed reaction is glutarate(in) + 2-oxoglutarate(out) = glutarate(out) + 2-oxoglutarate(in). The enzyme catalyses 2-oxoheptanedioate(in) + 2-oxoglutarate(out) = 2-oxoheptanedioate(out) + 2-oxoglutarate(in). It carries out the reaction heptanedioate(in) + 2-oxoglutarate(out) = heptanedioate(out) + 2-oxoglutarate(in). It catalyses the reaction citrate(in) + 2-oxoglutarate(out) = citrate(out) + 2-oxoglutarate(in). Functionally, transports dicarboxylates across the inner membranes of mitochondria by a counter-exchange mechanism. Can transport 2-oxoadipate (2-oxohexanedioate), 2-oxoglutarate, adipate (hexanedioate), glutarate, and to a lesser extent, pimelate (heptanedioate), 2-oxopimelate (2-oxoheptanedioate), 2-aminoadipate (2-aminohexanedioate), oxaloacetate, and citrate. Plays a central role in catabolism of lysine, hydroxylysine, and tryptophan, by transporting common metabolite intermediates (such as 2-oxoadipate) into the mitochondria, where it is converted into acetyl-CoA and can enter the citric acid (TCA) cycle. The protein is Mitochondrial 2-oxodicarboxylate carrier (SLC25A21) of Homo sapiens (Human).